Here is a 322-residue protein sequence, read N- to C-terminus: Epiphycan (322 aa).

The first 19 residues, 1 to 19 (MGMLARVALGLIIIDAVLA), serve as a signal peptide directing secretion. The interval 58–108 (KVSERLSGNRELLTPGPQLGDNQDEDKDEESTPRLIDGSSPQEPEFPGLLG) is disordered. A glycan (O-linked (Xyl...) (dermatan sulfate) serine) is linked at Ser-64. An O-linked (GalNAc...) serine glycan is attached at Ser-96. One can recognise an LRRNT domain in the interval 106-143 (LLGPHTNEDFPTCLLCTCISTTVYCDDHELDAIPPLPK). Cysteines 118 and 130 form a disulfide. LRR repeat units follow at residues 144–165 (KTTY…DFAS), 168–189 (DLKR…AFRK), 192–213 (HLQE…PNTL), 238–258 (DLHH…PLPE), and 259–280 (SLRA…TFCN). An intrachain disulfide couples Cys-279 to Cys-312. 2 N-linked (GlcNAc...) asparagine glycosylation sites follow: Asn-283 and Asn-302. Residues 290–310 (ALEDIRLDGNPINLSRTPQAY) form an LRR 6 repeat.

It belongs to the small leucine-rich proteoglycan (SLRP) family. SLRP class III subfamily. The O-linked polysaccharide on Ser-96 is probably the mucin type linked to GalNAc. There is one glycosaminoglycan chain, known to be dermatan sulfate, and it is probably the O-glycosylation at Ser-64. Confined to the middle zone of embryonic epiphyseal cartilage consisting of flattened chondrocytes and the ossifying region in the limb buds of chick embryos. Has also been detected in testis.

It localises to the secreted. The protein localises to the extracellular space. The protein resides in the extracellular matrix. Its function is as follows. May have a role in bone formation and also in establishing the ordered structure of cartilage through matrix organization. This Mus musculus (Mouse) protein is Epiphycan (Epyc).